The primary structure comprises 641 residues: ATP-dependent zinc metalloprotease FtsH (641 aa).

The Cytoplasmic portion of the chain corresponds to 1 to 16 (MNKQQKPKRSPLRPDY). Residues 17–37 (LVIVIIILLAIGMYFFFTEMM) traverse the membrane as a helical segment. Residues 38 to 131 (APKVKQFDEF…VSFVPHVSVD (94 aa)) lie on the Extracellular side of the membrane. The helical transmembrane segment at 132 to 152 (FWNIISTLLLIAAPIVLVVIM) threads the bilayer. Residues 153-641 (FRSMSSQSNK…EVEEDSKKSE (489 aa)) lie on the Cytoplasmic side of the membrane. 222–229 (GQPGTGKT) serves as a coordination point for ATP. Zn(2+) is bound at residue His-444. Glu-445 is an active-site residue. His-448 and Asp-520 together coordinate Zn(2+).

It in the central section; belongs to the AAA ATPase family. In the C-terminal section; belongs to the peptidase M41 family. In terms of assembly, homohexamer. It depends on Zn(2+) as a cofactor.

Its subcellular location is the cell membrane. Functionally, acts as a processive, ATP-dependent zinc metallopeptidase for both cytoplasmic and membrane proteins. Plays a role in the quality control of integral membrane proteins. This is ATP-dependent zinc metalloprotease FtsH from Acholeplasma laidlawii (strain PG-8A).